The following is a 133-amino-acid chain: Small ribosomal subunit protein uS8 (133 aa).

It belongs to the universal ribosomal protein uS8 family. As to quaternary structure, part of the 30S ribosomal subunit. Contacts proteins S5 and S12.

Its function is as follows. One of the primary rRNA binding proteins, it binds directly to 16S rRNA central domain where it helps coordinate assembly of the platform of the 30S subunit. The chain is Small ribosomal subunit protein uS8 from Lachnoclostridium phytofermentans (strain ATCC 700394 / DSM 18823 / ISDg) (Clostridium phytofermentans).